The chain runs to 230 residues: MKLSFHGQSTIYFEANGKKVIVDPFITGNELSDLNAEDVEVDYIVLTHGHGDHFGDTVEIAKKNNATVVGLAEVADYLSTSQGVENVHPMNIGGKWEFEFGSVKYVQAFHSSSLTNEDGIPVYLGASTGLILEVDGKTIYHCGDTGLFSDMKLIADRHPVDICFVPIGDNFTMGIEDASYAINEFIQPKISVPIHYDTFPYIEQNPEDFKKLVNKGEVQILKPGEEVKFD.

Belongs to the UPF0173 family.

This is UPF0173 metal-dependent hydrolase Sca_1312 from Staphylococcus carnosus (strain TM300).